The primary structure comprises 751 residues: MEHIYQYTWIIPFIPLTVPLLIGAGLIIFPTTTKNLRRMWAFPSILLLSLVMLFSTKLSIQQINSHYIYQSVWSWTINNDFSLEFGYLVDPLTSIMSMLITTVGILVLIYSDNYMVHDQGYLRFFAYLSFFNTSMLGLVTSSNFIQIYIFWELVGMCSYLLIGFWFTRPIAANACQKAFVTNRVGDFGLLLGILGLYWLTGSFEFRDLFEIFNTLIYNNEVHFLVGTVCTFLLFAGAVAKSAQFPLHVWLPDAMEGPTPISALIHAATMVAAGIFLVARLFPLLIVTPFILNLIALVGIITLFLGATLASCSKDIKRGLAYSTMSQLGYMMLALGMGSYRAALFHLITHAYSKALLFLGSGCVIHSMEAIVGYSPDKSQNMVFMGGLKKHVPITKTAFLLGTLSLSGIPPLACFWSKDEIINDTWLYSPIFAIISWATVGFTAFYMFRIYLLTFEGHLNVHFQNYNGKKSSSVYSISLWGHEGLKPINKNLSLFTLLPIKNNESFYKNPHGDIKKTIQSFLITNNCDNKKIVPYPHESGNTMLFPLLVLIIFTGVIGFIGIPFDQENMDFDILSSWLTPSVNLLHLKLNNKNSFDWSEFLTNATLSVSIAYSGIVLASFLYKPIYSYSSLQNFALINLFAKRHPKRFFSDKIKNVIYDWAHHRGYIDAFYTRYIIRSVRGLSQFINFFDRRVIDGIPNGLGVTSFFVGEGLKYVGGGRISSYLFLYLLYASIFLLIYYFDFTNININFTDQ.

16 helical membrane-spanning segments follow: residues 9–29 (WIIP…LIIF), 40–60 (WAFP…KLSI), 89–109 (VDPL…LVLI), 125–145 (FAYL…SNFI), 147–167 (IYIF…FWFT), 185–205 (GDFG…SFEF), 219–239 (NEVH…GAVA), 258–278 (TPIS…FLVA), 280–300 (LFPL…VGII), 327–347 (LGYM…FHLI), 354–374 (ALLF…VGYS), 396–416 (TAFL…CFWS), 425–445 (WLYS…TAFY), 543–563 (LFPL…GIPF), 599–619 (FLTN…LASF), and 719–739 (ISSY…IYYF).

This sequence belongs to the complex I subunit 5 family. In terms of assembly, NDH is composed of at least 16 different subunits, 5 of which are encoded in the nucleus.

Its subcellular location is the plastid. The protein localises to the chloroplast thylakoid membrane. It carries out the reaction a plastoquinone + NADH + (n+1) H(+)(in) = a plastoquinol + NAD(+) + n H(+)(out). The enzyme catalyses a plastoquinone + NADPH + (n+1) H(+)(in) = a plastoquinol + NADP(+) + n H(+)(out). NDH shuttles electrons from NAD(P)H:plastoquinone, via FMN and iron-sulfur (Fe-S) centers, to quinones in the photosynthetic chain and possibly in a chloroplast respiratory chain. The immediate electron acceptor for the enzyme in this species is believed to be plastoquinone. Couples the redox reaction to proton translocation, and thus conserves the redox energy in a proton gradient. The chain is NAD(P)H-quinone oxidoreductase subunit 5, chloroplastic (ndhF) from Fagopyrum esculentum subsp. ancestrale (Wild buckwheat).